We begin with the raw amino-acid sequence, 1312 residues long: Multidrug resistance protein 3 (1312 aa).

A helical membrane pass occupies residues G51–L71. In terms of domain architecture, ABC transmembrane type-1 1 spans I59–T369. The N-linked (GlcNAc...) asparagine glycan is linked to N98. 5 helical membrane passes run I127 to L147, K197 to S217, L224 to A244, V302 to S322, and M344 to I364. An ABC transporter 1 domain is found at I404–R643. Residue G439–S446 participates in ATP binding. The region spanning L724–K1033 is the ABC transmembrane type-1 2 domain. 2 helical membrane passes run L725–I745 and I776–F796. N819 carries N-linked (GlcNAc...) asparagine glycosylation. Transmembrane regions (helical) follow at residues V852–Y872, W874–N894, and A958–I978. The 240-residue stretch at I1068–Q1307 folds into the ABC transporter 2 domain. G1103–S1110 contributes to the ATP binding site.

Belongs to the ABC transporter superfamily. ABCB family. Multidrug resistance exporter (TC 3.A.1.201) subfamily.

The protein resides in the membrane. The enzyme catalyses ATP + H2O + xenobioticSide 1 = ADP + phosphate + xenobioticSide 2.. Its function is as follows. Energy-dependent efflux pump responsible for decreased drug accumulation in multidrug resistance parasites. The chain is Multidrug resistance protein 3 from Entamoeba histolytica (strain ATCC 30459 / HM-1:IMSS / ABRM).